The primary structure comprises 284 residues: MKQKVVSIGDIQVANDLPFVLFGGMNVLESRDLAMRICEHYVTVTQKLGIPYVFKASFDKANRSSIHSYRGPGLEEGMKIFQELKRTFGVKIITDVHTPEQAQPVADVVDIIQLPAFLARQTDLVEAMAKTGAVINVKKPQFLSPGQMGNIVDKFREGGNDRVILCDRGSNFGYDNLVVDMLGFGVMKSVSHGAPVIFDVTHSLQCRDPFGAASGGRRAQVTELARSGMAIGLAGLFIEAHPDPVHAMCDGPSALPLEKLEPFLVQMKAIDDLVKNFPPLDTAN.

It belongs to the KdsA family.

Its subcellular location is the cytoplasm. The enzyme catalyses D-arabinose 5-phosphate + phosphoenolpyruvate + H2O = 3-deoxy-alpha-D-manno-2-octulosonate-8-phosphate + phosphate. It functions in the pathway carbohydrate biosynthesis; 3-deoxy-D-manno-octulosonate biosynthesis; 3-deoxy-D-manno-octulosonate from D-ribulose 5-phosphate: step 2/3. Its pathway is bacterial outer membrane biogenesis; lipopolysaccharide biosynthesis. The protein is 2-dehydro-3-deoxyphosphooctonate aldolase of Edwardsiella ictaluri (strain 93-146).